The primary structure comprises 293 residues: Serine/threonine-protein phosphatase 2A catalytic subunit beta isoform (293 aa).

Positions 41, 43, 69, and 101 each coordinate Mn(2+). His-102 functions as the Proton donor in the catalytic mechanism. Residues His-151 and His-225 each coordinate Mn(2+). At Tyr-291 the chain carries Phosphotyrosine. At Leu-293 the chain carries Leucine methyl ester.

This sequence belongs to the PPP phosphatase family. PP-1 subfamily. Found in a complex with at least ARL2, PPP2CB, PPP2R1A, PPP2R2A, PPP2R5E and TBCD. Interacts with TBCD. PP2A consists of a common heterodimeric core enzyme (composed of a 36 kDa catalytic subunit (subunit C) and a 65 kDa constant regulatory subunit (PR65) (subunit A)) that associates with a variety of regulatory subunits. Proteins that associate with the core dimer include three families of regulatory subunits B (the R2/B/PR55/B55, R3/B''/PR72/PR130/PR59 and R5/B'/B56 families), the 48 kDa variable regulatory subunit, viral proteins, and cell signaling molecules. Binds PPME1. May indirectly interact with SGO1, most probably through regulatory B56 subunits. Interacts with CTTNBP2NL. Interacts with PTPA. Part of the core of STRIPAK complexes composed of PP2A catalytic and scaffolding subunits, the striatins (PP2A regulatory subunits), the striatin-associated proteins MOB4, STRIP1 and STRIP2, PDCD10 and members of the STE20 kinases, such as STK24 and STK26. The cofactor is Mn(2+). Post-translationally, reversibly methyl esterified on Leu-293 by leucine carboxyl methyltransferase 1 (Lcmt1) and protein phosphatase methylesterase 1 (PPME1). Carboxyl methylation influences the affinity of the catalytic subunit for the different regulatory subunits, thereby modulating the PP2A holoenzyme's substrate specificity, enzyme activity and cellular localization. In terms of processing, phosphorylation of either threonine (by autophosphorylation-activated protein kinase) or tyrosine results in inactivation of the phosphatase. Auto-dephosphorylation has been suggested as a mechanism for reactivation. May be monoubiquitinated by NOSIP.

It is found in the cytoplasm. It localises to the nucleus. Its subcellular location is the chromosome. The protein resides in the centromere. The protein localises to the cytoskeleton. It is found in the spindle pole. The enzyme catalyses O-phospho-L-seryl-[protein] + H2O = L-seryl-[protein] + phosphate. It carries out the reaction O-phospho-L-threonyl-[protein] + H2O = L-threonyl-[protein] + phosphate. Catalytic subunit of protein phosphatase 2A (PP2A), a serine/threonine phosphatase involved in the regulation of a wide variety of enzymes, signal transduction pathways, and cellular events. PP2A can modulate the activity of phosphorylase B kinase, casein kinase 2, mitogen-stimulated S6 kinase, and MAP-2 kinase. Part of the striatin-interacting phosphatase and kinase (STRIPAK) complexes. STRIPAK complexes have critical roles in protein (de)phosphorylation and are regulators of multiple signaling pathways including Hippo, MAPK, nuclear receptor and cytoskeleton remodeling. Different types of STRIPAK complexes are involved in a variety of biological processes such as cell growth, differentiation, apoptosis, metabolism and immune regulation. The chain is Serine/threonine-protein phosphatase 2A catalytic subunit beta isoform (PPP2CB) from Sus scrofa (Pig).